Here is an 828-residue protein sequence, read N- to C-terminus: Periplasmic nitrate reductase (828 aa).

A signal peptide (tat-type signal) is located at residues 1 to 32 (MNLSRRDFMKTNAAVAAAAVAGLAIPVKNVEA). The 4Fe-4S Mo/W bis-MGD-type domain maps to 38 to 94 (IKWDKAPCRFCGTGCSVLVGTQNGRVVASQGDPDADVNRGLNCIKGYFLPKIMYGKD). C45, C48, C52, and C80 together coordinate [4Fe-4S] cluster. Mo-bis(molybdopterin guanine dinucleotide) contacts are provided by residues K82, Q149, N174, C178, 211 to 218 (WGSNMAEM), 242 to 246 (STFEH), 261 to 263 (QSD), M372, Q376, N482, 508 to 509 (SD), K531, D558, and 718 to 727 (TGRVLEHWHT). Residue F794 coordinates substrate. Residues N802 and K819 each contribute to the Mo-bis(molybdopterin guanine dinucleotide) site.

The protein belongs to the prokaryotic molybdopterin-containing oxidoreductase family. NasA/NapA/NarB subfamily. As to quaternary structure, component of the periplasmic nitrate reductase NapAB complex composed of NapA and NapB. It depends on [4Fe-4S] cluster as a cofactor. Mo-bis(molybdopterin guanine dinucleotide) serves as cofactor. Predicted to be exported by the Tat system. The position of the signal peptide cleavage has not been experimentally proven.

It localises to the periplasm. The enzyme catalyses 2 Fe(II)-[cytochrome] + nitrate + 2 H(+) = 2 Fe(III)-[cytochrome] + nitrite + H2O. Functionally, catalytic subunit of the periplasmic nitrate reductase complex NapAB. Receives electrons from NapB and catalyzes the reduction of nitrate to nitrite. In Pasteurella multocida (strain Pm70), this protein is Periplasmic nitrate reductase.